Here is a 118-residue protein sequence, read N- to C-terminus: uncharacterized protein (118 aa).

This sequence to S.pombe tam6.

It localises to the mitochondrion. This is an uncharacterized protein from Saccharomyces cerevisiae (strain ATCC 204508 / S288c) (Baker's yeast).